The primary structure comprises 433 residues: Trigger factor (433 aa).

Residues 161–246 (GKRVSIDFVG…VNKVEARELP (86 aa)) enclose the PPIase FKBP-type domain.

This sequence belongs to the FKBP-type PPIase family. Tig subfamily.

Its subcellular location is the cytoplasm. The enzyme catalyses [protein]-peptidylproline (omega=180) = [protein]-peptidylproline (omega=0). Its function is as follows. Involved in protein export. Acts as a chaperone by maintaining the newly synthesized protein in an open conformation. Functions as a peptidyl-prolyl cis-trans isomerase. The sequence is that of Trigger factor from Vibrio cholerae serotype O1 (strain ATCC 39541 / Classical Ogawa 395 / O395).